A 507-amino-acid chain; its full sequence is ATP synthase subunit alpha (507 aa).

168 to 175 (GDRQTGKT) is an ATP binding site.

It belongs to the ATPase alpha/beta chains family. F-type ATPases have 2 components, CF(1) - the catalytic core - and CF(0) - the membrane proton channel. CF(1) has five subunits: alpha(3), beta(3), gamma(1), delta(1), epsilon(1). CF(0) has three main subunits: a(1), b(2) and c(9-12). The alpha and beta chains form an alternating ring which encloses part of the gamma chain. CF(1) is attached to CF(0) by a central stalk formed by the gamma and epsilon chains, while a peripheral stalk is formed by the delta and b chains.

It is found in the cell membrane. The enzyme catalyses ATP + H2O + 4 H(+)(in) = ADP + phosphate + 5 H(+)(out). Produces ATP from ADP in the presence of a proton gradient across the membrane. The alpha chain is a regulatory subunit. This Mesomycoplasma hyopneumoniae (strain J / ATCC 25934 / NCTC 10110) (Mycoplasma hyopneumoniae) protein is ATP synthase subunit alpha.